The primary structure comprises 299 residues: DNA-binding transcriptional repressor CapW (299 aa).

Residues 1–84 (MESSGSSKVR…EFKPITKRSE (84 aa)) form a winged HTH domain region. The WYL domain stretch occupies residues 85–196 (ATRYLNELQR…IGRLDVLEHV (112 aa)). The WYL domain maps to 120–200 (SRAIEADEVA…DVLEHVFSAK (81 aa)). A probable ligand-binding region region spans residues 145-189 (YQSMDAPEPQEWVLSPHALGFDGLRWHARAWCHARQVFRDFAIGR). Residues 197–299 (FSAKPVDPLL…DRDGLQHLRR (103 aa)) are WCX domain.

As to quaternary structure, homodimer.

Its function is as follows. Transcriptional regulator of a CBASS antivirus system. CBASS (cyclic oligonucleotide-based antiphage signaling system) provides immunity against bacteriophage. The CD-NTase protein synthesizes cyclic nucleotides in response to infection; these serve as specific second messenger signals. The signals activate a diverse range of effectors, leading to bacterial cell death and thus abortive phage infection. A type III CBASS system, part of a CapW-Cap6-Cap8-Cap7-CdnC-NucC locus. Binds specifically to palindromes that overlap the -10 site in the promoter of cap6, found beween found between the genes for divergently transcribed capW and cap6 (cognate DNA). Probably represses transcription bidirectionally from the promoter. Mutations that make it a constitutive repressor in E.coli do not change DNA-binding affinity. This chain is DNA-binding transcriptional repressor CapW, found in Stenotrophomonas maltophilia (Pseudomonas maltophilia).